A 243-amino-acid polypeptide reads, in one-letter code: Protein VERNALIZATION 1 (243 aa).

An MADS-box domain is found at 1 to 61 (MGRGKVQLKR…GKLYEFATDS (61 aa)). A K-box domain is found at 88–178 (QGNWCHEYRK…QKELVEKQKA (91 aa)). Residues 122-178 (LKELQQLEQQLESSLKHIRSRKNQLMHESISELQRKERSLQEENKALQKELVEKQKA) are a coiled coil. The segment at 173–243 (VEKQKAHTQQ…PPWMVSHISG (71 aa)) is disordered. Polar residues predominate over residues 179 to 192 (HTQQAQWEQTHPQT).

The protein localises to the nucleus. Functionally, component of a grass-specific mechanism of vernalization, a process by which prolonged cold exposure provides competence to flower in daylengths longer than 12 hours. Involved in the exit of vernalization and confers flowering competency at the expense of freezing tolerance, probably by promoting the expression of VRN3; this process is essential in cv. Bd29-1 for flowering but seems do not occur in cv. Bd21. The sequence is that of Protein VERNALIZATION 1 from Brachypodium distachyon (Purple false brome).